The primary structure comprises 299 residues: tRNA dimethylallyltransferase (299 aa).

Glycine 8–threonine 15 contributes to the ATP binding site. Position 10–15 (threonine 10–threonine 15) interacts with substrate. Positions aspartate 33–glutamine 36 are interaction with substrate tRNA.

The protein belongs to the IPP transferase family. Monomer. Requires Mg(2+) as cofactor.

The enzyme catalyses adenosine(37) in tRNA + dimethylallyl diphosphate = N(6)-dimethylallyladenosine(37) in tRNA + diphosphate. Catalyzes the transfer of a dimethylallyl group onto the adenine at position 37 in tRNAs that read codons beginning with uridine, leading to the formation of N6-(dimethylallyl)adenosine (i(6)A). In Anaeromyxobacter dehalogenans (strain 2CP-C), this protein is tRNA dimethylallyltransferase.